The following is a 404-amino-acid chain: Multidrug resistance protein MdtG (404 aa).

Helical transmembrane passes span 19-39, 56-76, 90-110, 113-133, 144-164, 171-191, 222-242, 254-274, 288-308, 317-337, and 376-396; these read LGCF…PLYV, LVFS…GGLA, LGMA…QFLI, ALLG…ATQV, TLST…GLLA, PVFF…FFFI, LFVT…ILTL, IAFI…LSAP, ILIV…FVQT, FLLG…LVYN, and AVFC…WNSL.

The protein belongs to the major facilitator superfamily. DHA1 family. MdtG (TC 2.A.1.2.20) subfamily.

The protein resides in the cell inner membrane. The polypeptide is Multidrug resistance protein MdtG (Salmonella choleraesuis (strain SC-B67)).